A 165-amino-acid polypeptide reads, in one-letter code: UPF0179 protein Igni_1272 (165 aa).

Belongs to the UPF0179 family.

The protein is UPF0179 protein Igni_1272 of Ignicoccus hospitalis (strain KIN4/I / DSM 18386 / JCM 14125).